The sequence spans 238 residues: tRNA (guanine-N(7)-)-methyltransferase (238 aa).

4 residues coordinate S-adenosyl-L-methionine: glutamate 68, glutamate 93, aspartate 121, and aspartate 143. Aspartate 143 is a catalytic residue. Substrate-binding positions include lysine 147, aspartate 179, and 216–219 (TRYE).

The protein belongs to the class I-like SAM-binding methyltransferase superfamily. TrmB family.

The catalysed reaction is guanosine(46) in tRNA + S-adenosyl-L-methionine = N(7)-methylguanosine(46) in tRNA + S-adenosyl-L-homocysteine. It participates in tRNA modification; N(7)-methylguanine-tRNA biosynthesis. Its function is as follows. Catalyzes the formation of N(7)-methylguanine at position 46 (m7G46) in tRNA. The chain is tRNA (guanine-N(7)-)-methyltransferase from Paramagnetospirillum magneticum (strain ATCC 700264 / AMB-1) (Magnetospirillum magneticum).